The chain runs to 266 residues: 4-hydroxy-tetrahydrodipicolinate reductase (266 aa).

10–15 serves as a coordination point for NAD(+); sequence GPRGRM. Lys38 serves as a coordination point for NADP(+). NAD(+) contacts are provided by residues 99-101 and 125-128; these read GTT and APNF. The active-site Proton donor/acceptor is the His155. (S)-2,3,4,5-tetrahydrodipicolinate is bound at residue His156. Catalysis depends on Lys159, which acts as the Proton donor. 165–166 is a binding site for (S)-2,3,4,5-tetrahydrodipicolinate; the sequence is GT.

The protein belongs to the DapB family.

Its subcellular location is the cytoplasm. It catalyses the reaction (S)-2,3,4,5-tetrahydrodipicolinate + NAD(+) + H2O = (2S,4S)-4-hydroxy-2,3,4,5-tetrahydrodipicolinate + NADH + H(+). It carries out the reaction (S)-2,3,4,5-tetrahydrodipicolinate + NADP(+) + H2O = (2S,4S)-4-hydroxy-2,3,4,5-tetrahydrodipicolinate + NADPH + H(+). It participates in amino-acid biosynthesis; L-lysine biosynthesis via DAP pathway; (S)-tetrahydrodipicolinate from L-aspartate: step 4/4. In terms of biological role, catalyzes the conversion of 4-hydroxy-tetrahydrodipicolinate (HTPA) to tetrahydrodipicolinate. This is 4-hydroxy-tetrahydrodipicolinate reductase from Bacillus thuringiensis subsp. konkukian (strain 97-27).